The chain runs to 88 residues: Toxin RelE3 (88 aa).

It belongs to the RelE toxin family. As to quaternary structure, forms heterodimers with RelB3 and possibly a heterotetramer RelE3-RelB3(2)-RelE3 from 2 heterodimers. The heterotetramer is probably not very stable in solution.

Its function is as follows. Toxic component of a type II toxin-antitoxin (TA) system. Has RNase activity. Is very toxic upon expression in E.coli. Its toxic activity is probably neutralized by the cognate antitoxin RelB3. The polypeptide is Toxin RelE3 (relE3) (Methanocaldococcus jannaschii (strain ATCC 43067 / DSM 2661 / JAL-1 / JCM 10045 / NBRC 100440) (Methanococcus jannaschii)).